We begin with the raw amino-acid sequence, 122 residues long: Large ribosomal subunit protein uL14 (122 aa).

Belongs to the universal ribosomal protein uL14 family. Part of the 50S ribosomal subunit. Forms a cluster with proteins L3 and L19. In the 70S ribosome, L14 and L19 interact and together make contacts with the 16S rRNA in bridges B5 and B8.

Binds to 23S rRNA. Forms part of two intersubunit bridges in the 70S ribosome. This Methylobacterium radiotolerans (strain ATCC 27329 / DSM 1819 / JCM 2831 / NBRC 15690 / NCIMB 10815 / 0-1) protein is Large ribosomal subunit protein uL14.